The sequence spans 210 residues: Chorismate pyruvate-lyase (210 aa).

The protein belongs to the chorismate pyruvate-lyase type 2 family.

It catalyses the reaction chorismate = 4-hydroxybenzoate + pyruvate. Its function is as follows. Removes the pyruvyl group from chorismate to provide 4-hydroxybenzoate (4HB). Involved in the synthesis of glycosylated p-hydroxybenzoic acid methyl esters (p-HBADs) and phenolic glycolipids (PGL) that play important roles in the pathogenesis of mycobacterial infections. This is Chorismate pyruvate-lyase from Mycobacterium leprae (strain TN).